Consider the following 484-residue polypeptide: UDP-N-acetylmuramate--L-alanine ligase (484 aa).

125–131 lines the ATP pocket; it reads GTHGKTT.

It belongs to the MurCDEF family.

The protein resides in the cytoplasm. The enzyme catalyses UDP-N-acetyl-alpha-D-muramate + L-alanine + ATP = UDP-N-acetyl-alpha-D-muramoyl-L-alanine + ADP + phosphate + H(+). It functions in the pathway cell wall biogenesis; peptidoglycan biosynthesis. Its function is as follows. Cell wall formation. This is UDP-N-acetylmuramate--L-alanine ligase from Buchnera aphidicola subsp. Acyrthosiphon pisum (strain Tuc7).